The primary structure comprises 320 residues: Cytochrome f (320 aa).

The first 35 residues, 1–35 (MQNRNFNNLIIKWAIRLISIMIIINTIFWSSISEA), serve as a signal peptide directing secretion. The heme site is built by Phe-36, Cys-56, Cys-59, and His-60. Residues 286-305 (IQGLLLFFGSVILAQIFLVL) traverse the membrane as a helical segment.

This sequence belongs to the cytochrome f family. The 4 large subunits of the cytochrome b6-f complex are cytochrome b6, subunit IV (17 kDa polypeptide, petD), cytochrome f and the Rieske protein, while the 4 small subunits are PetG, PetL, PetM and PetN. The complex functions as a dimer. Heme serves as cofactor.

The protein resides in the plastid. It localises to the chloroplast thylakoid membrane. Its function is as follows. Component of the cytochrome b6-f complex, which mediates electron transfer between photosystem II (PSII) and photosystem I (PSI), cyclic electron flow around PSI, and state transitions. This is Cytochrome f (petA) from Marchantia polymorpha (Common liverwort).